A 241-amino-acid polypeptide reads, in one-letter code: Probable transcriptional regulatory protein stu0195 (241 aa).

It belongs to the TACO1 family. YeeN subfamily.

It localises to the cytoplasm. In Streptococcus thermophilus (strain ATCC BAA-250 / LMG 18311), this protein is Probable transcriptional regulatory protein stu0195.